Here is a 506-residue protein sequence, read N- to C-terminus: MARDFKLIFSISILLLLLDCCYGGKVGVCYGRSADDLPTPSKVVQLIQQHNIKYVRIYDYNSQVLKAFGNTSIELMIGVPNSDLNAFSQSQSNVDTWLKNSVLPYYPTTKITYITVGAESTDDPHINASSFVVPAMQNVLTALRKVGLSRRIKVSTTLSLGILSRSFPPSAGAFNSSYAYFLRPMLEFLAENKSPFMIDLYPYYAYRDSPNNVSLDYVLFESSSEVIDPNTGLLYKNMFDAQVDALYYALTALNFRTIKIMVTETGWPTKGSPKEKAAASSDNAETYNSNIIRHVVTNQGTPAKPGEAMNVYIFSLFNENRKAGLDSERNWGLFYPDQTSVYQLDFTGKSNGFHSNSSGTNSSGSSNSWCIASSKASERDLKGALDWACGPGNVDCTAIQPSQPCFQPDTLVSHASFVFNSYFQQNRATDVACSFGGAGVKVNKDPSYDKCIYITAGGNKTKATNATALTSSASTPRGNELLQWILKLCLMISLFFSLQTMNSQAL.

Positions 1 to 22 are cleaved as a signal peptide; sequence MARDFKLIFSISILLLLLDCCY. Residue asparagine 70 is glycosylated (N-linked (GlcNAc...) asparagine). Glutamate 119 (proton donor) is an active-site residue. N-linked (GlcNAc...) asparagine glycosylation is found at asparagine 127, asparagine 175, and asparagine 212. The active-site Nucleophile is the glutamate 264. Residues asparagine 356 and asparagine 361 are each glycosylated (N-linked (GlcNAc...) asparagine). A disulfide bridge connects residues cysteine 370 and cysteine 433. N-linked (GlcNAc...) asparagine glycosylation is found at asparagine 459 and asparagine 465. Serine 471 carries the GPI-anchor amidated serine lipid modification. A propeptide spans 472–506 (removed in mature form); sequence SASTPRGNELLQWILKLCLMISLFFSLQTMNSQAL.

It belongs to the glycosyl hydrolase 17 family. Contains two additional disulfide bonds.

It is found in the secreted. It localises to the cell wall. The protein localises to the cell membrane. It catalyses the reaction Hydrolysis of (1-&gt;3)-beta-D-glucosidic linkages in (1-&gt;3)-beta-D-glucans.. This is Glucan endo-1,3-beta-glucosidase 13 from Arabidopsis thaliana (Mouse-ear cress).